Here is a 146-residue protein sequence, read N- to C-terminus: MNKVQIGAPRTSASPGVIMKPEGSVKIAVMNGSRQVDQVVNGEWLTMKVLPEAGLPKGIHQLSDAKDASKNVHPHKHVGQVLHDDGRNVYQFSEGGIVKHSRGIFEKPPVVGKNYEIAYSRGQGKVIGEVSQEQAAKAEQKRSRSI.

This is Protein TraB (traB) from Escherichia coli.